The primary structure comprises 214 residues: Adenylate kinase (214 aa).

10–15 (GAGKGT) contributes to the ATP binding site. The segment at 30 to 59 (STGDMLRAAVKAGTPLGLEAKKVMDAGQLV) is NMP. Residues Thr31, Arg36, 57–59 (QLV), 85–88 (GFPR), and Gln92 contribute to the AMP site. The interval 122-159 (GRRVHSGSGRVYHVVFNPPKVEGKDDVTGEDLSIRPDD) is LID. ATP contacts are provided by residues Arg123 and 132-133 (VY). 2 residues coordinate AMP: Arg156 and Arg167. Position 200 (Gln200) interacts with ATP.

The protein belongs to the adenylate kinase family. As to quaternary structure, monomer.

It localises to the cytoplasm. The enzyme catalyses AMP + ATP = 2 ADP. It participates in purine metabolism; AMP biosynthesis via salvage pathway; AMP from ADP: step 1/1. Catalyzes the reversible transfer of the terminal phosphate group between ATP and AMP. Plays an important role in cellular energy homeostasis and in adenine nucleotide metabolism. The protein is Adenylate kinase of Shewanella denitrificans (strain OS217 / ATCC BAA-1090 / DSM 15013).